Consider the following 339-residue polypeptide: Intelectin-1 (339 aa).

The signal sequence occupies residues 1–18 (MLSYSLLLLALAFPAGHA). Residues 58 to 108 (GDMNYGYRSCNEIKSSDSRAPDGIYTLATEDGESYQTFCDMTTNGGGWTLV) form the Fibrinogen C-terminal domain. The cysteines at positions 67 and 96 are disulfide-linked. Ca(2+)-binding residues include His112, Glu113, Asn115, Gly118, Gly123, Asp124, and Asp159. Cystine bridges form between Cys120-Cys306, Cys225-Cys285, and Cys277-Cys291. Residue Asn189 is glycosylated (N-linked (GlcNAc...) asparagine). Ca(2+) is bound by residues Asn286, Glu288, Glu300, and Asp308. A carbohydrate-binding positions include 288–289 (EH) and Glu300.

In terms of assembly, homotrimer; disulfide-linked. Homohexamer; disulfide-linked. Forms primarily homotrimers in solution, but can also form homohexamers. N-glycosylated.

Its subcellular location is the secreted. The protein resides in the cytoplasmic vesicle. It localises to the secretory vesicle. In terms of biological role, lectin that specifically recognizes microbial carbohydrate chains in a calcium-dependent manner. Binds to microbial glycans that contain a terminal acyclic 1,2-diol moiety, including beta-linked D-galactofuranose (beta-Galf) and D-phosphoglycerol-modified glycans. Binds to S.pneumoniae serotypes with glycans that contain beta-linked D-galactofuranose (beta-Galf) and with D-phosphoglycerol-modified glycans. Can bind a variety of monosaccharides (in vitro). Probably plays a role in the defense system against microorganisms. This is Intelectin-1 (itln1) from Xenopus laevis (African clawed frog).